A 443-amino-acid polypeptide reads, in one-letter code: ATP-dependent protease ATPase subunit HslU (443 aa).

ATP-binding positions include Ile18, 60-65 (GVGKTE), Asp256, Glu321, and Arg393.

Belongs to the ClpX chaperone family. HslU subfamily. In terms of assembly, a double ring-shaped homohexamer of HslV is capped on each side by a ring-shaped HslU homohexamer. The assembly of the HslU/HslV complex is dependent on binding of ATP.

It localises to the cytoplasm. In terms of biological role, ATPase subunit of a proteasome-like degradation complex; this subunit has chaperone activity. The binding of ATP and its subsequent hydrolysis by HslU are essential for unfolding of protein substrates subsequently hydrolyzed by HslV. HslU recognizes the N-terminal part of its protein substrates and unfolds these before they are guided to HslV for hydrolysis. The polypeptide is ATP-dependent protease ATPase subunit HslU (Citrobacter koseri (strain ATCC BAA-895 / CDC 4225-83 / SGSC4696)).